The chain runs to 836 residues: Lon protease (836 aa).

The Lon N-terminal domain occupies 41-233 (LPVLPLRNTV…RLIHFLNREV (193 aa)). Residue 385 to 392 (GPPGVGKT) coordinates ATP. The 185-residue stretch at 627–811 (VMLSGVAVGL…DDLIDYVLEP (185 aa)) folds into the Lon proteolytic domain. Active-site residues include Ser-714 and Lys-757. Residues 816 to 836 (APQFKVEDKDHTPETTGNESE) form a disordered region.

The protein belongs to the peptidase S16 family. In terms of assembly, homohexamer. Organized in a ring with a central cavity.

The protein localises to the cytoplasm. The catalysed reaction is Hydrolysis of proteins in presence of ATP.. In terms of biological role, ATP-dependent serine protease that mediates the selective degradation of mutant and abnormal proteins as well as certain short-lived regulatory proteins. Required for cellular homeostasis and for survival from DNA damage and developmental changes induced by stress. Degrades polypeptides processively to yield small peptide fragments that are 5 to 10 amino acids long. Binds to DNA in a double-stranded, site-specific manner. This Chloroherpeton thalassium (strain ATCC 35110 / GB-78) protein is Lon protease.